The following is a 189-amino-acid chain: NADH-quinone oxidoreductase subunit B (189 aa).

Positions 39, 40, 104, and 135 each coordinate [4Fe-4S] cluster.

Belongs to the complex I 20 kDa subunit family. In terms of assembly, NDH-1 is composed of 14 different subunits. Subunits NuoB, C, D, E, F, and G constitute the peripheral sector of the complex. The cofactor is [4Fe-4S] cluster.

It localises to the cell inner membrane. It carries out the reaction a quinone + NADH + 5 H(+)(in) = a quinol + NAD(+) + 4 H(+)(out). Functionally, NDH-1 shuttles electrons from NADH, via FMN and iron-sulfur (Fe-S) centers, to quinones in the respiratory chain. The immediate electron acceptor for the enzyme in this species is believed to be a menaquinone. Couples the redox reaction to proton translocation (for every two electrons transferred, four hydrogen ions are translocated across the cytoplasmic membrane), and thus conserves the redox energy in a proton gradient. This Chlorobium phaeovibrioides (strain DSM 265 / 1930) (Prosthecochloris vibrioformis (strain DSM 265)) protein is NADH-quinone oxidoreductase subunit B.